We begin with the raw amino-acid sequence, 175 residues long: RNA pyrophosphohydrolase (175 aa).

The Nudix hydrolase domain maps to Gly6 to Lys149. A Nudix box motif is present at residues Gly38–Gly59.

It belongs to the Nudix hydrolase family. RppH subfamily. The cofactor is a divalent metal cation.

In terms of biological role, accelerates the degradation of transcripts by removing pyrophosphate from the 5'-end of triphosphorylated RNA, leading to a more labile monophosphorylated state that can stimulate subsequent ribonuclease cleavage. This Erwinia tasmaniensis (strain DSM 17950 / CFBP 7177 / CIP 109463 / NCPPB 4357 / Et1/99) protein is RNA pyrophosphohydrolase.